A 184-amino-acid chain; its full sequence is GMP synthase [glutamine-hydrolyzing] subunit A (184 aa).

Positions 3–184 constitute a Glutamine amidotransferase type-1 domain; it reads HIAVIDNHGQ…VFKNFIARCQ (182 aa). Residue C75 is the Nucleophile of the active site. Residues H163 and E165 contribute to the active site.

Heterodimer composed of a glutamine amidotransferase subunit (A) and a GMP-binding subunit (B).

The catalysed reaction is XMP + L-glutamine + ATP + H2O = GMP + L-glutamate + AMP + diphosphate + 2 H(+). It participates in purine metabolism; GMP biosynthesis; GMP from XMP (L-Gln route): step 1/1. Functionally, catalyzes the synthesis of GMP from XMP. This is GMP synthase [glutamine-hydrolyzing] subunit A from Haloquadratum walsbyi (strain DSM 16790 / HBSQ001).